The chain runs to 1196 residues: NACHT, LRR and PYD domains-containing protein 1b allele 5 (1196 aa).

Residues 1 to 22 form a disordered region; the sequence is MEESPPKQKSNTKVTQHEGQQD. Positions 126-435 constitute an NACHT domain; the sequence is QLVIIEGAAG…EFFAAISCIL (310 aa). 132 to 139 is a binding site for ATP; sequence GAAGIGKS. LRR repeat units follow at residues 627-647 and 684-704; these read NLEG…QSLC and SLTE…RMLC. The ZU5 stretch occupies residues 789 to 922; the sequence is FWGPTGPVAT…GYTVLKNPSF (134 aa). An FIIND domain is found at 789–1072; that stretch reads FWGPTGPVAT…KFDHLCDQEF (284 aa). The interval 923 to 1072 is UPA; it reads SPMGVVLRII…KFDHLCDQEF (150 aa). The 84-residue stretch at 1106–1189 folds into the CARD domain; sequence HFMDQHREQL…HLVMDLFEKS (84 aa).

This sequence belongs to the NLRP family. In terms of assembly, interacts with DPP9; leading to inhibit activation of the inflammasome. DPP9 acts via formation of a ternary complex, composed of a DPP9 homodimer, one full-length Nlrp1b protein, and one cleaved C-terminus of Nlrp1b (NACHT, LRR and PYD domains-containing protein 1b, C-terminus). Interacts with DPP8; leading to inhibit activation of the inflammasome, probably via formation of a ternary complex with DPP8. Interacts (via LRR repeats) with BCL2 and BCL2L1 (via the loop between motifs BH4 and BH3). Interacts with NOD2; this interaction may increase IL1B release. Interacts with EIF2AK2/PKR; this interaction requires EIF2AK2 activity, is accompanied by EIF2AK2 autophosphorylation and promotes inflammasome assembly in response to B.anthracis lethal toxin. Interacts with MEFV; this interaction targets Nlrp1b to degradation by autophagy, hence preventing excessive IL1B- and IL18-mediated inflammation. As to quaternary structure, interacts with the C-terminal part of Nlrp1b (NACHT, LRR and PYD domains-containing protein 1b, C-terminus) in absence of pathogens and other damage-associated signals. Interacts with the N-terminal part of Nlrp1b (NACHT, LRR and PYD domains-containing protein 1b, N-terminus) in absence of pathogens and other damage-associated signals. Homomultimer; forms the Nlrp1b inflammasome polymeric complex, a filament composed of homopolymers of this form in response to pathogens and other damage-associated signals. The Nlrp1b inflammasome polymeric complex directly recruits pro-caspase-1 (proCASP1) independently of PYCARD/ASC. Interacts (via CARD domain) with CASP1 (via CARD domain); leading to CASP1 activation. In terms of processing, autocatalytically cleaved. Autocatalytic cleavage in FIIND region occurs constitutively, prior to activation signals, and is required for inflammasome activity (IL1B release), possibly by facilitating CASP1 binding. Both N- and C-terminal parts remain associated non-covalently. Post-translationally, ubiquitinated by the N-end rule pathway in response to pathogens and other damage-associated signals, leading to its degradation by the proteasome and subsequent release of the cleaved C-terminal part of the protein (NACHT, LRR and PYD domains-containing protein 1b, C-terminus), which polymerizes and forms the Nlrp1b inflammasome. (Microbial infection) Cleavage by B.anthracis lethal toxin (LT) endopeptidase promotes ubiquitination and degradation of the N-terminal part, releasing the cleaved C-terminal part of the protein (NACHT, LRR and PYD domains-containing protein 1b, C-terminus), which polymerizes and forms the Nlrp1b inflammasome. Expressed in macrophages.

It localises to the cytoplasm. It is found in the cytosol. Its subcellular location is the inflammasome. With respect to regulation, activated by cleavage by B.anthracis lethal toxin (LT) endopeptidase. Cleavage by LT promotes ubiquitination and degradation of the N-terminal part, releasing the cleaved C-terminal part of the protein (NACHT, LRR and PYD domains-containing protein 1b, C-terminus), which polymerizes and forms the Nlrp1b inflammasome. Nlrp1b inflammasome is inhibited by DPP8 and DPP9, which sequester the C-terminal fragment of Nlrp1b (NACHT, LRR and PYD domains-containing protein 1b, C-terminus) in a ternary complex, thereby preventing Nlrp1b oligomerization and activation. Nlrp1b inflammasome is activated by Val-boroPro (Talabostat, PT-100), an inhibitor of dipeptidyl peptidases DPP8 and DPP9. Val-boroPro relieves inhibition of DPP8 and/or DPP9 by promoting disruption of the ternary complex, releasing its C-terminal part from autoinhibition. Activated by metabolic inhibitors, such as 2-deoxy-D-glucose and sodium azide. Not activated by muramyl dipeptide, nor by full-length bacterial peptidoglycan. In terms of biological role, acts as the sensor component of the Nlrp1b inflammasome, which mediates inflammasome activation in response to various pathogen-associated signals, leading to subsequent pyroptosis. Inflammasomes are supramolecular complexes that assemble in the cytosol in response to pathogens and other damage-associated signals and play critical roles in innate immunity and inflammation. Acts as a recognition receptor (PRR): recognizes specific pathogens and other damage-associated signals, such as B.anthracis lethal toxin (LT) or Val-boroPro inhibitor, and mediates the formation of the inflammasome polymeric complex. In response to pathogen-associated signals, the N-terminal part of Nlrp1b is degraded by the proteasome, releasing the cleaved C-terminal part of the protein (NACHT, LRR and PYD domains-containing protein 1b, C-terminus), which polymerizes to initiate the formation of the inflammasome complex: the inflammasome directly recruits pro-caspase-1 (proCASP1) independently of PYCARD/ASC and promotes caspase-1 (CASP1) activation, which subsequently cleaves and activates inflammatory cytokines IL1B and IL18 and gasdermin-D (GSDMD), leading to pyroptosis. In the absence of GSDMD expression, the Nlrp1b inflammasome is able to recruit and activate CASP8, leading to activation of gasdermin-E (GSDME). Activation of Nlrp1b inflammasome is also required for HMGB1 secretion; the active cytokines and HMGB1 stimulate inflammatory responses. Primary mediator of macrophage susceptibility to B.anthracis LT: in response to B.anthracis infection, macrophages and dendritic cells release IL1B and undergo pyroptosis. This early inflammatory response to the toxin increases resistance to infection by B.anthracis spores. Functionally, constitutes the precursor of the Nlrp1b inflammasome, which mediates autoproteolytic processing within the FIIND domain to generate the N-terminal and C-terminal parts, which are associated non-covalently in absence of pathogens and other damage-associated signals. Its function is as follows. Regulatory part that prevents formation of the Nlrp1b inflammasome: in absence of pathogens and other damage-associated signals, interacts with the C-terminal part of Nlrp1b (NACHT, LRR and PYD domains-containing protein 1b, C-terminus), preventing activation of the Nlrp1b inflammasome. In response to pathogen-associated signals, this part is ubiquitinated by the N-end rule pathway and degraded by the proteasome, releasing the cleaved C-terminal part of the protein, which polymerizes and forms the Nlrp1b inflammasome. Constitutes the active part of the Nlrp1b inflammasome. In absence of pathogens and other damage-associated signals, interacts with the N-terminal part of Nlrp1b (NACHT, LRR and PYD domains-containing protein 1b, N-terminus), preventing activation of the Nlrp1b inflammasome. In response to pathogen-associated signals, the N-terminal part of Nlrp1b is degraded by the proteasome, releasing this form, which polymerizes to form the Nlrp1b inflammasome complex: the Nlrp1b inflammasome complex then directly recruits pro-caspase-1 (proCASP1) and promotes caspase-1 (CASP1) activation, leading to gasdermin-D (GSDMD) cleavage and subsequent pyroptosis. This Mus musculus (Mouse) protein is NACHT, LRR and PYD domains-containing protein 1b allele 5 (Nlrp1b).